Reading from the N-terminus, the 1406-residue chain is DNA-directed RNA polymerase subunit beta' (1406 aa).

Residues C70, C72, C85, and C88 each coordinate Zn(2+). Mg(2+) is bound by residues D460, D462, and D464. Zn(2+)-binding residues include C814, C888, C895, and C898.

Belongs to the RNA polymerase beta' chain family. In terms of assembly, the RNAP catalytic core consists of 2 alpha, 1 beta, 1 beta' and 1 omega subunit. When a sigma factor is associated with the core the holoenzyme is formed, which can initiate transcription. The cofactor is Mg(2+). Zn(2+) is required as a cofactor.

It carries out the reaction RNA(n) + a ribonucleoside 5'-triphosphate = RNA(n+1) + diphosphate. In terms of biological role, DNA-dependent RNA polymerase catalyzes the transcription of DNA into RNA using the four ribonucleoside triphosphates as substrates. The polypeptide is DNA-directed RNA polymerase subunit beta' (Yersinia enterocolitica serotype O:8 / biotype 1B (strain NCTC 13174 / 8081)).